Consider the following 464-residue polypeptide: Argininosuccinate lyase (464 aa).

Belongs to the lyase 1 family. Argininosuccinate lyase subfamily.

Its subcellular location is the cytoplasm. It catalyses the reaction 2-(N(omega)-L-arginino)succinate = fumarate + L-arginine. It participates in amino-acid biosynthesis; L-arginine biosynthesis; L-arginine from L-ornithine and carbamoyl phosphate: step 3/3. The protein is Argininosuccinate lyase of Herminiimonas arsenicoxydans.